Reading from the N-terminus, the 548-residue chain is (2S)-methylsuccinyl-CoA dehydrogenase (548 aa).

Residues 282–291 (AVFTEPNTGS) and 315–317 (WIT) contribute to the FAD site. Ser-291 is a substrate binding site. Substrate is bound at residue 409–412 (ESAR). FAD is bound by residues Arg-437 and 505 to 509 (QIHGG). Glu-532 (proton acceptor) is an active-site residue. 534-536 (AAE) is a binding site for FAD.

It belongs to the acyl-CoA dehydrogenase family. Homodimer. Requires FAD as cofactor.

The catalysed reaction is (2S)-methylsuccinyl-CoA + oxidized [electron-transfer flavoprotein] + H(+) = 2-methylfumaryl-CoA + reduced [electron-transfer flavoprotein]. Functionally, involved in the ethylmalonyl-CoA pathway, a new acetyl-CoA assimilation strategy that operates in a number of bacteria and replaces the glyoxylate cycle. Catalyzes the oxidation of (2S)-methylsuccinyl-CoA to yield mesaconyl-(C1)-CoA. Highly specific for (S)-methylsuccinyl-CoA. This chain is (2S)-methylsuccinyl-CoA dehydrogenase, found in Cereibacter sphaeroides (Rhodobacter sphaeroides).